We begin with the raw amino-acid sequence, 142 residues long: Small ribosomal subunit protein bS6 (142 aa).

The segment covering 110 to 133 has biased composition (basic and acidic residues); sequence NKKPSHAKEKHEKTEHTHSHHTEE. A disordered region spans residues 110–142; it reads NKKPSHAKEKHEKTEHTHSHHTEEAESVGSHSE.

The protein belongs to the bacterial ribosomal protein bS6 family.

Functionally, binds together with bS18 to 16S ribosomal RNA. The sequence is that of Small ribosomal subunit protein bS6 (rpsF) from Helicobacter pylori (strain ATCC 700392 / 26695) (Campylobacter pylori).